Consider the following 830-residue polypeptide: Phenylalanine--tRNA ligase beta subunit (830 aa).

Residues 39 to 158 (GQSLDGVVVG…DDTPVGTPFP (120 aa)) form the tRNA-binding domain. Residues 417 to 492 (PAEKTIALRP…RLHGYDQIPE (76 aa)) form the B5 domain. Mg(2+) is bound by residues aspartate 470, aspartate 476, glutamate 479, and glutamate 480. Positions 490–510 (IPEPERVPVPSRTPEQPPEET) are disordered. Residues 736 to 828 (SRFPVVDRDL…LAENHGARLR (93 aa)) enclose the FDX-ACB domain.

Belongs to the phenylalanyl-tRNA synthetase beta subunit family. Type 1 subfamily. As to quaternary structure, tetramer of two alpha and two beta subunits. Mg(2+) is required as a cofactor.

It localises to the cytoplasm. It carries out the reaction tRNA(Phe) + L-phenylalanine + ATP = L-phenylalanyl-tRNA(Phe) + AMP + diphosphate + H(+). In Salinibacter ruber (strain DSM 13855 / M31), this protein is Phenylalanine--tRNA ligase beta subunit.